The following is a 199-amino-acid chain: Hematopoietic prostaglandin D synthase (199 aa).

The 78-residue stretch at 2–79 (PNYKLLYFNM…YLTKNTDLAG (78 aa)) folds into the GST N-terminal domain. Glutathione-binding positions include Tyr8, Arg14, Trp39, 49-51 (GKI), and 63-64 (QS). The GST C-terminal domain occupies 81–199 (TALEQCQADA…WILKRPQTKL (119 aa)).

The protein belongs to the GST superfamily. Sigma family. In terms of assembly, homodimer. Glutathione serves as cofactor. Expressed in skin and oviduct.

It localises to the cytoplasm. It carries out the reaction prostaglandin H2 = prostaglandin D2. The catalysed reaction is RX + glutathione = an S-substituted glutathione + a halide anion + H(+). It catalyses the reaction 2-glyceryl-prostaglandin H2 = 2-glyceryl-prostaglandin D2. Its function is as follows. Bifunctional enzyme which catalyzes both the conversion of PGH2 to PGD2, a prostaglandin involved in smooth muscle contraction/relaxation and a potent inhibitor of platelet aggregation, and the conjugation of glutathione with a wide range of aryl halides and organic isothiocyanates. Also exhibits low glutathione-peroxidase activity. This Mus musculus (Mouse) protein is Hematopoietic prostaglandin D synthase.